Here is an 860-residue protein sequence, read N- to C-terminus: MTIVVFATEYDAANVIFSILCRSPSEHLIFPIIVKYKPSNNVSFCLQTQKCKNSKRIDTVFVCHAEKLNLSHYIQTASPIKAEDVANSLNDKETESLYVDMILSQTGKEREDVEFKYMAYFHKSLIIKYLTGKFLLPTSPFWFLSTYGQTEGMLLLTMFYYLFEEQKSTITTTKNYVQCFTENTGNMVFTYSSMSEFINITLKSKFRKLFADFSTYARQKNLRDKEEFKHLDTQINLFRKSSHLTNTFRVHYIYIAYNTALETTKFVNYCNLTSYDSNLPIGQQCQRNLHILGNSLHENLLCIMKQYFNADCYFKTYIDIKRLKNPNLNVTEYEYALVSKKKTIQALTSEQITRAIAKCNKNGEGLFSPVKPGLQGLLEISASDRYVQIQDKRIYRRQHLHKDYHRPFPVFRVQLLHKNIFCFGNSEDWYENMGFNRILQYLPDEYISDEALTRAIWLQDTHFLCDDVEKQFYTTRHEIFNERIPVTNYIGDLDLPLQDTATITEETFFSMCRLIRLTLINAWKKIFPSIDTDTHPIFFFKTQCDTTNDTLDYTEDPTEIKQFCVCRKKIGLRISIPLPNGTAIAGGEPLKQLSKILNHVMCLDQELSQILNSITFPGECFDIGIYHTGHCIRIGYMYKTDMDKGKMLHGRLTPIFIVPEGYRNSCKTFIQMQMDLNNLLHHGTKKAPIEELIYNITDKGCPKENLSFMDLKSRQLWNKVNIATETLITKYLNTHGFNNNATSADDSLLSFIRLIGWPIIKTQLITHYETRIAQQFSQVTFIKIDSKNLQIKKTQFGRVSDFSCLNRQHRGNRDNVLVYIQLKADGNRLILILWSTCFATKCQSNSKQVHCSIALEQLKN.

A CHC2-type zinc finger spans residues 804–842; the sequence is CLNRQHRGNRDNVLVYIQLKADGNRLILILWSTCFATKC.

Belongs to the herpesviridae DNA primase family. As to quaternary structure, associates with the helicase and the primase-associated factor to form the helicase-primase factor.

The protein localises to the host nucleus. Functionally, essential component of the helicase/primase complex. Unwinds the DNA at the replication forks and generates single-stranded DNA for both leading and lagging strand synthesis. The primase initiates primer synthesis and thereby produces large amount of short RNA primers on the lagging strand that the polymerase elongates using dNTPs. The protein is DNA primase (U43) of Homo sapiens (Human).